We begin with the raw amino-acid sequence, 358 residues long: Peptide chain release factor 1 (358 aa).

Gln237 is subject to N5-methylglutamine.

Belongs to the prokaryotic/mitochondrial release factor family. Post-translationally, methylated by PrmC. Methylation increases the termination efficiency of RF1.

The protein resides in the cytoplasm. In terms of biological role, peptide chain release factor 1 directs the termination of translation in response to the peptide chain termination codons UAG and UAA. The polypeptide is Peptide chain release factor 1 (Streptomyces griseus subsp. griseus (strain JCM 4626 / CBS 651.72 / NBRC 13350 / KCC S-0626 / ISP 5235)).